An 83-amino-acid polypeptide reads, in one-letter code: Small ribosomal subunit protein bS20 (83 aa).

Residues 60-83 (ASKGLIHKNKASRDKSRLAAKLAN) form a disordered region.

It belongs to the bacterial ribosomal protein bS20 family.

In terms of biological role, binds directly to 16S ribosomal RNA. This chain is Small ribosomal subunit protein bS20, found in Streptococcus thermophilus (strain CNRZ 1066).